The sequence spans 315 residues: High mobility group protein hmg-12 (315 aa).

The interval 57–315 (VKNETDSEAV…AIDAFFDGSD (259 aa)) is disordered. Over residues 77–86 (ANDSPANTND) the composition is skewed to polar residues. The a.T hook 1 DNA-binding region spans 118–128 (PVKKGRGRPIK). 2 stretches are compositionally biased toward low complexity: residues 147 to 160 (AQTPAADTDAIDTA) and 196 to 205 (AADTDAIDTA).

This sequence belongs to the HMGA family.

Its subcellular location is the nucleus. Transcriptional regulator. Binds to specific sequence motifs in regulatory elements. May recruit transcription factors, or may induce structural changes in chromatin, to thereby modulate embryonic expression of ATP-dependent chaperone cdc-48.1. This chain is High mobility group protein hmg-12, found in Caenorhabditis elegans.